We begin with the raw amino-acid sequence, 444 residues long: MSIEAEALLQEAKESIEAAQNYRSELQQRLHGLSQARKQVRGSASQTRKALQRHFQELQTAVSRLLIDRLNGLLQEVDNIELDSVSPLDDCQKLIEHGVSTADELLREGEAAIRCSINETEDKLGSFTKKALQIQLDSLPEVPSLVDVPCLSAQLDDSLLHMFRAHVARHGSVASHPPVQIEELVERPGGVLVRWCKVDDDFSPQDYRLQFRRSNSSQYEDAYIGKDTEFLVLHLDPHVDHLFRVCARGEGRTEWSPWSIPQTGYTTLAPHEWCPGVDGYILSSRKNIAMRSDSSAPGHGGVLYSNSPTYFCGQTLTFKITAAGQTDKRDSLGVCADSRTDTDSLQRDQAVCISTNGAVFVNGKEMTNQLPAITVGSSVTFDMEVVSLFPVNNNNPSDGGNFKLRVTIGSGNREVVFDWLLDQVLDSLFFGCSFTHPGWKVLVF.

Positions Met-1–Leu-65 form a coiled coil. The Fibronectin type-III domain occupies Pro-177–Pro-270.

Belongs to the cytokine receptor-like factor 3 family.

It is found in the cytoplasm. Its function is as follows. May play a role in the negative regulation of cell cycle progression. The sequence is that of Cytokine receptor-like factor 3 (crlf3) from Danio rerio (Zebrafish).